We begin with the raw amino-acid sequence, 389 residues long: Cytochrome B translational activator CBS2 (389 aa).

The protein localises to the mitochondrion. Translational activator of cytochrome b. The cytochrome b (coB) leader RNA may represent the target sequence for CBS1 and/ or CBS2. This chain is Cytochrome B translational activator CBS2 (CBS2), found in Saccharomyces cerevisiae (strain ATCC 204508 / S288c) (Baker's yeast).